We begin with the raw amino-acid sequence, 263 residues long: 5'-nucleotidase SurE (263 aa).

Residues Asp15, Asp16, Ser46, and Asn102 each contribute to the a divalent metal cation site.

The protein belongs to the SurE nucleotidase family. A divalent metal cation is required as a cofactor.

It is found in the cytoplasm. The enzyme catalyses a ribonucleoside 5'-phosphate + H2O = a ribonucleoside + phosphate. In terms of biological role, nucleotidase that shows phosphatase activity on nucleoside 5'-monophosphates. This Chlorobaculum tepidum (strain ATCC 49652 / DSM 12025 / NBRC 103806 / TLS) (Chlorobium tepidum) protein is 5'-nucleotidase SurE.